We begin with the raw amino-acid sequence, 89 residues long: Small ribosomal subunit protein uS15 (89 aa).

This sequence belongs to the universal ribosomal protein uS15 family. Part of the 30S ribosomal subunit. Forms a bridge to the 50S subunit in the 70S ribosome, contacting the 23S rRNA.

Functionally, one of the primary rRNA binding proteins, it binds directly to 16S rRNA where it helps nucleate assembly of the platform of the 30S subunit by binding and bridging several RNA helices of the 16S rRNA. In terms of biological role, forms an intersubunit bridge (bridge B4) with the 23S rRNA of the 50S subunit in the ribosome. This is Small ribosomal subunit protein uS15 from Bacillus licheniformis (strain ATCC 14580 / DSM 13 / JCM 2505 / CCUG 7422 / NBRC 12200 / NCIMB 9375 / NCTC 10341 / NRRL NRS-1264 / Gibson 46).